The chain runs to 3071 residues: Intermembrane lipid transfer protein vps1301 (3071 aa).

Residues 2 to 115 enclose the Chorein N-terminal domain; it reads LEGLVAGLLN…QQALKQEQLD (114 aa). Residues 2143 to 2415 form the SHR-BD domain; the sequence is HIEIFSPYII…KYSWDYPCCA (273 aa).

The protein belongs to the VPS13 family.

The protein resides in the golgi apparatus. It localises to the trans-Golgi network. Its function is as follows. Mediates the transfer of lipids between membranes at organelle contact sites. May play a role in mitochondrial lipid homeostasis, Golgi vesicle transport, reticulophagy, actin cytoskeleton organization and formation of the forespore membrane. This chain is Intermembrane lipid transfer protein vps1301, found in Schizosaccharomyces pombe (strain 972 / ATCC 24843) (Fission yeast).